Here is a 113-residue protein sequence, read N- to C-terminus: Ferredoxin-1 (113 aa).

4Fe-4S ferredoxin-type domains follow at residues 2 to 30 (TYIVTDACVRCKFMDCVEVCPVDCFYEGE) and 31 to 60 (NFLVINPDECIDCGVCEPECPVDAIKPDTE). [3Fe-4S] cluster is bound by residues cysteine 9 and cysteine 17. Residues cysteine 21, cysteine 40, cysteine 43, and cysteine 46 each coordinate [4Fe-4S] cluster. Cysteine 50 is a [3Fe-4S] cluster binding site.

The cofactor is [4Fe-4S] cluster. Requires [3Fe-4S] cluster as cofactor.

The chain is Ferredoxin-1 (fdxA) from Caulobacter vibrioides (strain ATCC 19089 / CIP 103742 / CB 15) (Caulobacter crescentus).